The primary structure comprises 1043 residues: Non-canonical nonribosomal peptide synthetase cpsA (1043 aa).

Residues 41 to 386 are adenylation (A) domain; sequence RRAQENPSAP…IGGDGVSPGY (346 aa). The Carrier domain occupies 549–626; the sequence is QDASTTISRL…QMARYVDEGG (78 aa). Serine 586 is modified (O-(pantetheine 4'-phosphoryl)serine). Positions 671 to 914 are short-chain dehydrogenase/reductase (R) domain; the sequence is MTGATGFVGA…FVPVDYLVDA (244 aa). Positions 672-915 constitute a Thioester reductase (TE) domain; that stretch reads TGATGFVGAF…VPVDYLVDAI (244 aa).

This sequence belongs to the NRP synthetase family. Pantetheine 4'-phosphate serves as cofactor.

The catalysed reaction is L-valine + ATP + NADPH + H(+) = L-valinal + AMP + diphosphate + NADP(+). It carries out the reaction L-tryptophan + ATP + NADPH + H(+) = L-tryptophanal + AMP + diphosphate + NADP(+). Its pathway is alkaloid biosynthesis. Its function is as follows. Non-canonical nonribosomal peptide synthetase; part of the gene cluster that mediates the biosynthesis of campesine G, a dimeric indole piperazine alkaloid that shows good insecticidal activity Galleria mellonella. CpsA catalyzes the first steps of the pathway by producing L-tryptophanal and L-valinal from their respective amino-acids. These products condensate spontaneously to form trypyl-valyl pyrazine also known as didehydrocampesine A. The NmrA-like family domain-containing oxidoreductase cpsB is the next enzyme in cps pathway and reduces the unstable didehydrocampesine A to campesine A. The methyltransferase cpsF and the acetyltransferase cpsE both recognize N13 of piperazine ring to carry out methylation and acetylation of campesine A to produce campesine C and B, respectively. The cytochrome P450 monooxygenase cpsD then acts as a dimerase that catalyzes oxidative heterocoupling between campesine B and C to produce heterodimers with unexpected 6/5/6/6/6/6/5/6 eight-ring scaffold called campesine D. Finally,the cytochrome P450 monooxygenase cpsC is a regioselective dehydrogenase that catalyzes dehydrogenation reaction towards C2-N1 to produce campesine G. In Aspergillus campestris (strain IBT 28561), this protein is Non-canonical nonribosomal peptide synthetase cpsA.